The sequence spans 586 residues: CTP synthase 2 (586 aa).

The 255-residue stretch at 300–554 (SIALVGKYTK…LAATGNLNAY (255 aa)) folds into the Glutamine amidotransferase type-1 domain. Catalysis depends on for GATase activity residues Cys399, His526, and Glu528. Residues 564–586 (SDRYSDASDDSFSEPRLAELEIS) form a disordered region. 3 positions are modified to phosphoserine: Ser568, Ser571, and Ser574.

The protein belongs to the CTP synthase family.

The catalysed reaction is UTP + L-glutamine + ATP + H2O = CTP + L-glutamate + ADP + phosphate + 2 H(+). Its pathway is pyrimidine metabolism; CTP biosynthesis via de novo pathway; CTP from UDP: step 2/2. Functionally, catalyzes the ATP-dependent amination of UTP to CTP with either L-glutamine or ammonia as the source of nitrogen. Constitutes the rate-limiting enzyme in the synthesis of cytosine nucleotides. The chain is CTP synthase 2 (CTPS2) from Bos taurus (Bovine).